The primary structure comprises 70 residues: uncharacterized protein (70 aa).

The protein localises to the plastid. This is an uncharacterized protein from Euglena longa (Euglenophycean alga).